Here is a 113-residue protein sequence, read N- to C-terminus: Endoribonuclease SymE (113 aa).

The region spanning S29–P74 is the SpoVT-AbrB domain.

The protein belongs to the SymE family.

Its subcellular location is the cytoplasm. Involved in the degradation and recycling of damaged RNA. It is itself a target for degradation by the ATP-dependent protease Lon. The polypeptide is Endoribonuclease SymE (Escherichia coli O6:K15:H31 (strain 536 / UPEC)).